We begin with the raw amino-acid sequence, 301 residues long: Phosphatidylglycerol--prolipoprotein diacylglyceryl transferase (301 aa).

4 helical membrane passes run 10–30, 57–77, 92–112, and 119–139; these read IAFS…LAGF, LLFY…MLFY, VWEG…AVAW, and MHMF…LGFG. Position 140 (Arg-140) interacts with a 1,2-diacyl-sn-glycero-3-phospho-(1'-sn-glycerol). A run of 3 helical transmembrane segments spans residues 202–222, 230–250, and 264–284; these read PSQL…LWLF, YAVS…VEFV, and LTRG…LFWL.

Belongs to the Lgt family.

The protein localises to the cell inner membrane. The catalysed reaction is L-cysteinyl-[prolipoprotein] + a 1,2-diacyl-sn-glycero-3-phospho-(1'-sn-glycerol) = an S-1,2-diacyl-sn-glyceryl-L-cysteinyl-[prolipoprotein] + sn-glycerol 1-phosphate + H(+). Its pathway is protein modification; lipoprotein biosynthesis (diacylglyceryl transfer). In terms of biological role, catalyzes the transfer of the diacylglyceryl group from phosphatidylglycerol to the sulfhydryl group of the N-terminal cysteine of a prolipoprotein, the first step in the formation of mature lipoproteins. The chain is Phosphatidylglycerol--prolipoprotein diacylglyceryl transferase from Xylella fastidiosa (strain M23).